We begin with the raw amino-acid sequence, 360 residues long: Photosystem II protein D1 2 (360 aa).

A run of 3 helical transmembrane segments spans residues 29 to 46 (YIGW…AATI), 118 to 133 (HFLI…EWEL), and 142 to 156 (WIPV…AATA). Histidine 118 is a binding site for chlorophyll a. Pheophytin a is bound at residue tyrosine 126. 2 residues coordinate [CaMn4O5] cluster: aspartate 170 and glutamate 189. Residues 197 to 218 (FHMLGVAGVFGGALFAAMHGSL) traverse the membrane as a helical segment. Position 198 (histidine 198) interacts with chlorophyll a. Residues histidine 215 and 264 to 265 (SF) each bind a quinone. Fe cation is bound at residue histidine 215. Fe cation is bound at residue histidine 272. Residues 274–288 (FLAAWPVVGIWFAAL) form a helical membrane-spanning segment. The [CaMn4O5] cluster site is built by histidine 332, glutamate 333, aspartate 342, and alanine 344. The propeptide occupies 345 to 360 (SGELAPVAMIAPSIEA).

It belongs to the reaction center PufL/M/PsbA/D family. PSII is composed of 1 copy each of membrane proteins PsbA, PsbB, PsbC, PsbD, PsbE, PsbF, PsbH, PsbI, PsbJ, PsbK, PsbL, PsbM, PsbT, PsbX, PsbY, PsbZ, Psb30/Ycf12, peripheral proteins PsbO, CyanoQ (PsbQ), PsbU, PsbV and a large number of cofactors. It forms dimeric complexes. It depends on The D1/D2 heterodimer binds P680, chlorophylls that are the primary electron donor of PSII, and subsequent electron acceptors. It shares a non-heme iron and each subunit binds pheophytin, quinone, additional chlorophylls, carotenoids and lipids. D1 provides most of the ligands for the Mn4-Ca-O5 cluster of the oxygen-evolving complex (OEC). There is also a Cl(-1) ion associated with D1 and D2, which is required for oxygen evolution. The PSII complex binds additional chlorophylls, carotenoids and specific lipids. as a cofactor. Post-translationally, tyr-161 forms a radical intermediate that is referred to as redox-active TyrZ, YZ or Y-Z. In terms of processing, C-terminally processed by CtpA; processing is essential to allow assembly of the oxygen-evolving complex and thus photosynthetic growth.

It localises to the cellular thylakoid membrane. The enzyme catalyses 2 a plastoquinone + 4 hnu + 2 H2O = 2 a plastoquinol + O2. Functionally, photosystem II (PSII) is a light-driven water:plastoquinone oxidoreductase that uses light energy to abstract electrons from H(2)O, generating O(2) and a proton gradient subsequently used for ATP formation. It consists of a core antenna complex that captures photons, and an electron transfer chain that converts photonic excitation into a charge separation. The D1/D2 (PsbA/PsbD) reaction center heterodimer binds P680, the primary electron donor of PSII as well as several subsequent electron acceptors. The sequence is that of Photosystem II protein D1 2 from Synechococcus elongatus.